A 392-amino-acid chain; its full sequence is Gastricsin (392 aa).

The signal sequence occupies residues 1–16 (MKWMVVALLCLPLLEA). Positions 17-62 (ALIRVPLKKMKSIRETMKEQGVLKDFLKNHKYDPGQKYHFGKFGDY) are cleaved as a propeptide — activation peptide. In terms of domain architecture, Peptidase A1 spans 76–389 (YYGEISIGTP…DMGNNRVGLA (314 aa)). Asp-94 is an active-site residue. 2 cysteine pairs are disulfide-bonded: Cys-107-Cys-112 and Cys-270-Cys-275. Asp-280 is an active-site residue. Cys-314 and Cys-347 are disulfide-bonded.

This sequence belongs to the peptidase A1 family.

The protein localises to the secreted. The enzyme catalyses More restricted specificity than pepsin A, but shows preferential cleavage at Tyr-|-Xaa bonds. High activity on hemoglobin.. Its function is as follows. Hydrolyzes a variety of proteins. In Mus musculus (Mouse), this protein is Gastricsin (Pgc).